The sequence spans 82 residues: Small ribosomal subunit protein uS17 (82 aa).

This sequence belongs to the universal ribosomal protein uS17 family. As to quaternary structure, part of the 30S ribosomal subunit.

Functionally, one of the primary rRNA binding proteins, it binds specifically to the 5'-end of 16S ribosomal RNA. This chain is Small ribosomal subunit protein uS17, found in Rhodopseudomonas palustris (strain HaA2).